Reading from the N-terminus, the 212-residue chain is Ribonuclease HII (212 aa).

The 189-residue stretch at Q24 to E212 folds into the RNase H type-2 domain. A divalent metal cation-binding residues include D30, E31, and D122.

This sequence belongs to the RNase HII family. Requires Mn(2+) as cofactor. Mg(2+) serves as cofactor.

It is found in the cytoplasm. It catalyses the reaction Endonucleolytic cleavage to 5'-phosphomonoester.. Endonuclease that specifically degrades the RNA of RNA-DNA hybrids. In Vibrio campbellii (strain ATCC BAA-1116), this protein is Ribonuclease HII.